The primary structure comprises 317 residues: Phospho-N-acetylmuramoyl-pentapeptide-transferase (317 aa).

Helical transmembrane passes span 3–23, 48–68, 72–92, 112–132, 141–161, 171–191, 193–213, 238–258, and 297–317; these read VIIY…PLFI, GTPT…MIIM, LNSN…IGLI, FLLQ…RFGS, ITWT…FVAV, LDGL…VVSF, WHQY…LGFL, AIAL…IYVI, and VVSV…LSLI.

This sequence belongs to the glycosyltransferase 4 family. MraY subfamily. Requires Mg(2+) as cofactor.

Its subcellular location is the cell membrane. It carries out the reaction UDP-N-acetyl-alpha-D-muramoyl-L-alanyl-gamma-D-glutamyl-meso-2,6-diaminopimeloyl-D-alanyl-D-alanine + di-trans,octa-cis-undecaprenyl phosphate = di-trans,octa-cis-undecaprenyl diphospho-N-acetyl-alpha-D-muramoyl-L-alanyl-D-glutamyl-meso-2,6-diaminopimeloyl-D-alanyl-D-alanine + UMP. The protein operates within cell wall biogenesis; peptidoglycan biosynthesis. In terms of biological role, catalyzes the initial step of the lipid cycle reactions in the biosynthesis of the cell wall peptidoglycan: transfers peptidoglycan precursor phospho-MurNAc-pentapeptide from UDP-MurNAc-pentapeptide onto the lipid carrier undecaprenyl phosphate, yielding undecaprenyl-pyrophosphoryl-MurNAc-pentapeptide, known as lipid I. This is Phospho-N-acetylmuramoyl-pentapeptide-transferase from Clostridium acetobutylicum (strain ATCC 824 / DSM 792 / JCM 1419 / IAM 19013 / LMG 5710 / NBRC 13948 / NRRL B-527 / VKM B-1787 / 2291 / W).